A 374-amino-acid chain; its full sequence is Chaperone protein DnaJ (374 aa).

One can recognise a J domain in the interval 5-69 (NYYQILGVSK…QKRAAYDRLG (65 aa)). The CR-type zinc finger occupies 137-215 (GIEKNISFSS…CHGMGRYHKQ (79 aa)). Zn(2+)-binding residues include Cys-150, Cys-153, Cys-167, Cys-170, Cys-189, Cys-192, Cys-203, and Cys-206. CXXCXGXG motif repeat units follow at residues 150–157 (CDTCHGSG), 167–174 (CDACSGVG), 189–196 (CHKCQGNG), and 203–210 (CKKCHGMG).

The protein belongs to the DnaJ family. As to quaternary structure, homodimer. Zn(2+) is required as a cofactor.

The protein resides in the cytoplasm. Functionally, participates actively in the response to hyperosmotic and heat shock by preventing the aggregation of stress-denatured proteins and by disaggregating proteins, also in an autonomous, DnaK-independent fashion. Unfolded proteins bind initially to DnaJ; upon interaction with the DnaJ-bound protein, DnaK hydrolyzes its bound ATP, resulting in the formation of a stable complex. GrpE releases ADP from DnaK; ATP binding to DnaK triggers the release of the substrate protein, thus completing the reaction cycle. Several rounds of ATP-dependent interactions between DnaJ, DnaK and GrpE are required for fully efficient folding. Also involved, together with DnaK and GrpE, in the DNA replication of plasmids through activation of initiation proteins. This is Chaperone protein DnaJ from Rickettsia massiliae (strain Mtu5).